The chain runs to 263 residues: MWYMRWEGVSDGLKVTAGSVIQRDDLVQYTTTDDATSSGGVLRVPIACSSAGAVGNADDGTALILVTPVNGLPSSGVADTLTGGFDTEELETWRARVIERYYWTPQGGADGDYVVWAKEVPGITRAWTYRHLMGTGTVGVMIASSDLINPIPEESTETAARQHIGPLAPVAGSDLYVFRPVAHTVDFHIRVTPDTPEIRAAITAELRSFLLRDGYPQGELKVSRISEAISGANGEYSHQLLAPVDNISIAKNELAVLGTISWT.

The protein belongs to the Mu gp47/PBSX XkdT family.

The polypeptide is Putative protein JayE (jayE) (Escherichia coli (strain K12)).